A 401-amino-acid polypeptide reads, in one-letter code: Subtilisin-like protease 10 (401 aa).

An N-terminal signal peptide occupies residues 1 to 19 (MLFLKAVIAILSVLPAADA). Positions 20–116 (AAILNFENKQ…IEPDRMASAQ (97 aa)) are excised as a propeptide. An Inhibitor I9 domain is found at 35-112 (SYIVVLKNDI…QVDYIEPDRM (78 aa)). One can recognise a Peptidase S8 domain in the interval 126-401 (SWGLGRISHQ…NRLLYNGSGQ (276 aa)). Residues Asp-158 and His-189 each act as charge relay system in the active site. Asn-250 is a glycosylation site (N-linked (GlcNAc...) asparagine). The active-site Charge relay system is the Ser-347. Residue Asn-397 is glycosylated (N-linked (GlcNAc...) asparagine).

It belongs to the peptidase S8 family.

Its subcellular location is the secreted. Its function is as follows. Secreted subtilisin-like serine protease with keratinolytic activity that contributes to pathogenicity. The polypeptide is Subtilisin-like protease 10 (SUB10) (Arthroderma otae (strain ATCC MYA-4605 / CBS 113480) (Microsporum canis)).